A 718-amino-acid chain; its full sequence is Kelch-like protein 4 (718 aa).

Positions 46–69 are disordered; the sequence is TPVQGRLKSHSRDRNGLKKSNSPV. The 68-residue stretch at 182–249 folds into the BTB domain; the sequence is CDVLLIAGHL…AYTGVLQLKE (68 aa). Kelch repeat units lie at residues 430 to 476, 477 to 523, 525 to 570, 571 to 617, 619 to 670, and 671 to 717; these read ALYA…VIDN, KLYV…TLEG, MYAV…ALNN, KLYA…TYNG, LYVV…PLGD, and KLYV…VVKL.

Expressed in adult fibroblasts and in a range of fetal tissues including tongue, palate, and mandible.

It localises to the cytoplasm. Its subcellular location is the cytoskeleton. This Homo sapiens (Human) protein is Kelch-like protein 4 (KLHL4).